The following is a 646-amino-acid chain: Aquaglycerol porin AQY3 (646 aa).

Low complexity predominate over residues 1 to 14; the sequence is MSYESGRSSSSSES. 2 disordered regions span residues 1 to 68 and 175 to 262; these read MSYE…SRNK and KNMD…KKRT. Topologically, residues 1-350 are cytoplasmic; that stretch reads MSYESGRSSS…AKIRYHMREP (350 aa). Residues 19 to 41 are compositionally biased toward basic and acidic residues; sequence TLKEEPNGKIAWEESVKKSRENN. The segment covering 190 to 201 has biased composition (polar residues); sequence TDISRGGSTTSV. A helical transmembrane segment spans residues 351–371; sequence FAEFLGTLVLVIFGVGGNLQA. Topologically, residues 372-383 are extracellular; it reads TVTKGSGGSYES. Residues 384-404 traverse the membrane as a helical segment; the sequence is LSFAWGFGCMLGVYVAGGISG. The Cytoplasmic segment spans residues 405–427; it reads GHINPAVTISMAIFRKFPWKKVP. The NPA 1 motif lies at 408–410; it reads NPA. Residues 428–448 form a helical membrane-spanning segment; sequence VYIVAQIIGAYFGGAMAYGYF. At 449–481 the chain is on the extracellular side; sequence WSSITEFEGGPHIRTTATGACLFTDPKSYVTWR. A helical transmembrane segment spans residues 482 to 502; it reads NAFFDEFIGASILVGCLMALL. The Cytoplasmic segment spans residues 503–509; sequence DDSNAPP. A helical membrane pass occupies residues 510–530; that stretch reads GNGMTALIIGFLVAAIGMALG. Residues 531–569 are Extracellular-facing; it reads YQTSFTINPARDLGPRIFASMIGYGPHAFHLTHWWWTWG. Positions 538–540 match the NPA 2 motif; it reads NPA. Residues 570 to 590 form a helical membrane-spanning segment; sequence AWGGPIAGGIAGALIYDIFIF. Residues 591 to 646 are Cytoplasmic-facing; it reads TGCESPVNYPDNGYIENRVGKLLHAEFHQNDGTVSDESGVNSNSNTGSKKSVPTSS. Positions 621-646 are disordered; that stretch reads DGTVSDESGVNSNSNTGSKKSVPTSS.

Belongs to the MIP/aquaporin (TC 1.A.8) family.

It is found in the cell membrane. It catalyses the reaction glycerol(in) = glycerol(out). In terms of biological role, channel protein that mediates glycerol entry under ethanol stimulation. Does not seem to mediate glycerol uptake under standard conditions. This Saccharomyces cerevisiae (strain ATCC 204508 / S288c) (Baker's yeast) protein is Aquaglycerol porin AQY3.